A 475-amino-acid chain; its full sequence is Arginine biosynthesis bifunctional protein ArgJ 1, mitochondrial (475 aa).

6 residues coordinate substrate: Thr-204, Lys-233, Thr-244, Glu-331, Asn-470, and Thr-475. Residue Thr-244 is the Nucleophile of the active site.

Belongs to the ArgJ family. As to quaternary structure, heterodimer of an alpha and a beta chain. The alpha and beta chains are autoproteolytically processed from a single precursor protein within the mitochondrion.

Its subcellular location is the mitochondrion matrix. It carries out the reaction N(2)-acetyl-L-ornithine + L-glutamate = N-acetyl-L-glutamate + L-ornithine. It catalyses the reaction L-glutamate + acetyl-CoA = N-acetyl-L-glutamate + CoA + H(+). It participates in amino-acid biosynthesis; L-arginine biosynthesis; L-ornithine and N-acetyl-L-glutamate from L-glutamate and N(2)-acetyl-L-ornithine (cyclic): step 1/1. The protein operates within amino-acid biosynthesis; L-arginine biosynthesis; N(2)-acetyl-L-ornithine from L-glutamate: step 1/4. Its function is as follows. Catalyzes two activities which are involved in the cyclic version of arginine biosynthesis: the synthesis of acetylglutamate from glutamate and acetyl-CoA, and of ornithine by transacetylation between acetylornithine and glutamate. The polypeptide is Arginine biosynthesis bifunctional protein ArgJ 1, mitochondrial (Botryotinia fuckeliana (strain B05.10) (Noble rot fungus)).